The sequence spans 133 residues: Transcription antitermination protein NusB (133 aa).

This sequence belongs to the NusB family.

Functionally, involved in transcription antitermination. Required for transcription of ribosomal RNA (rRNA) genes. Binds specifically to the boxA antiterminator sequence of the ribosomal RNA (rrn) operons. In Pediococcus pentosaceus (strain ATCC 25745 / CCUG 21536 / LMG 10740 / 183-1w), this protein is Transcription antitermination protein NusB.